The primary structure comprises 328 residues: Carbonic anhydrase-related protein 11 (328 aa).

The signal sequence occupies residues 1-23 (MGAAPRLSAPRVLVLWAALGAAA). Positions 33–303 (DWWSYKDNLQ…LAHRALRGNR (271 aa)) constitute an Alpha-carbonic anhydrase domain. N-linked (GlcNAc...) asparagine glycosylation is present at Asn-118. Residues 300–328 (RGNRDPRHPERRCRGPNYRLHVDDVPHGL) are disordered. The segment covering 319 to 328 (LHVDDVPHGL) has biased composition (basic and acidic residues).

It belongs to the alpha-carbonic anhydrase family.

The protein localises to the secreted. Functionally, does not have a catalytic activity. The protein is Carbonic anhydrase-related protein 11 (CA11) of Ovis aries (Sheep).